Reading from the N-terminus, the 249-residue chain is MFSFFLENQTITDTLQTYIQRKLSPLGSPDYAYTVVSKKNPSNVLIISSYPDEWIRLYRANNFQLTDPVILTAFKRTSPFAWDENITLMSDLRFTKIFSLSKQYNIVNGFTYVLHDHMNNLALLSVIIKGNDQTALEQRLAAEQGTMQMLLIDFNEQMYRLAGTEGERAPALNQSADKTIFSSRENEVLYWASMGKTYAEIAAITGISVSTVKFHIKNVVVKLGVSNARQAIRLGVELDLIRPAASAAR.

The HTH luxR-type domain occupies 174-239; it reads QSADKTIFSS…QAIRLGVELD (66 aa). The H-T-H motif DNA-binding region spans 198–217; that stretch reads YAEIAAITGISVSTVKFHIK.

It belongs to the autoinducer-regulated transcriptional regulatory protein family.

Functions as a potential OhlL-responsive transcriptional regulator. In Pantoea stewartii subsp. stewartii (Erwinia stewartii), this protein is Transcriptional activator protein EsaR (esaR).